Reading from the N-terminus, the 1322-residue chain is Phosphoribosylformylglycinamidine synthase (1322 aa).

ATP contacts are provided by residues 300–311 and Ala-702; that span reads GASTGAGGEIRD. 4 residues coordinate Mg(2+): Asp-703, Glu-742, Asn-746, and Asp-915. Ser-917 is a binding site for ATP. One can recognise a Glutamine amidotransferase type-1 domain in the interval 1073–1322; the sequence is VAILREQGIN…LFRNARAWVG (250 aa). Cys-1166 (nucleophile) is an active-site residue. Residues His-1287 and Glu-1289 contribute to the active site.

This sequence in the N-terminal section; belongs to the FGAMS family. Monomer.

The protein localises to the cytoplasm. The enzyme catalyses N(2)-formyl-N(1)-(5-phospho-beta-D-ribosyl)glycinamide + L-glutamine + ATP + H2O = 2-formamido-N(1)-(5-O-phospho-beta-D-ribosyl)acetamidine + L-glutamate + ADP + phosphate + H(+). It participates in purine metabolism; IMP biosynthesis via de novo pathway; 5-amino-1-(5-phospho-D-ribosyl)imidazole from N(2)-formyl-N(1)-(5-phospho-D-ribosyl)glycinamide: step 1/2. Functionally, phosphoribosylformylglycinamidine synthase involved in the purines biosynthetic pathway. Catalyzes the ATP-dependent conversion of formylglycinamide ribonucleotide (FGAR) and glutamine to yield formylglycinamidine ribonucleotide (FGAM) and glutamate. The chain is Phosphoribosylformylglycinamidine synthase from Xylella fastidiosa (strain Temecula1 / ATCC 700964).